Reading from the N-terminus, the 424-residue chain is CinA-like protein (424 aa).

Belongs to the CinA family.

The polypeptide is CinA-like protein (Shewanella baltica (strain OS155 / ATCC BAA-1091)).